We begin with the raw amino-acid sequence, 473 residues long: Hyaluronidase-2 (473 aa).

The first 20 residues, 1-20 (MRAGPGPTVTLALVLAVSWA), serve as a signal peptide directing secretion. Intrachain disulfides connect cysteine 47–cysteine 340 and cysteine 211–cysteine 227. 2 N-linked (GlcNAc...) asparagine glycosylation sites follow: asparagine 74 and asparagine 103. Residue glutamate 135 is the Proton donor of the active site. Residue asparagine 357 is glycosylated (N-linked (GlcNAc...) asparagine). The region spanning 361 to 439 (ATQYCSRAQC…YLGWSGEQCQ (79 aa)) is the EGF-like domain. 3 disulfides stabilise this stretch: cysteine 365-cysteine 376, cysteine 370-cysteine 427, and cysteine 429-cysteine 438. Glycine 448 carries GPI-anchor amidated glycine lipidation. A propeptide spans 449 to 473 (ASEAWAGSHLTSLLALAALAFTWTL) (removed in mature form).

Belongs to the glycosyl hydrolase 56 family. Interacts with MST1R. As to expression, widely expressed (at protein level).

It localises to the cell membrane. It catalyses the reaction Random hydrolysis of (1-&gt;4)-linkages between N-acetyl-beta-D-glucosamine and D-glucuronate residues in hyaluronate.. In terms of biological role, catalyzes hyaluronan degradation into small fragments that are endocytosed and degraded in lysosomes by HYAL1 and exoglycosidases. Essential for the breakdown of extracellular matrix hyaluronan. The polypeptide is Hyaluronidase-2 (HYAL2) (Homo sapiens (Human)).